The primary structure comprises 537 residues: Actin-histidine N-methyltransferase (537 aa).

The span at M1–K12 shows a compositional bias: basic residues. Residues M1–K50 are disordered. Residues R114, Y143–L145, R299, D325–H329, and N375–F377 each bind S-adenosyl-L-methionine. Positions E133–G364 constitute an SET domain.

It belongs to the class V-like SAM-binding methyltransferase superfamily. SETD3 actin-histidine methyltransferase family.

Its subcellular location is the cytoplasm. It is found in the nucleus. It catalyses the reaction L-histidyl-[protein] + S-adenosyl-L-methionine = N(tele)-methyl-L-histidyl-[protein] + S-adenosyl-L-homocysteine + H(+). Its function is as follows. Protein-histidine N-methyltransferase that specifically mediates 3-methylhistidine (tele-methylhistidine) methylation of actin at 'His-74'. This Drosophila melanogaster (Fruit fly) protein is Actin-histidine N-methyltransferase.